The chain runs to 321 residues: CRISPR-associated aCascade subunit Cas7/Csa2 2 (321 aa).

It belongs to the CRISPR-associated protein Cas7/Cst2/DevR family. Subtype I-a/Apern subfamily. As to quaternary structure, part of the aCascade ribonucleoprotein complex, minimally composed of Csa2 and Cas5a, which binds crRNA. Other possible components of aCascade in strain P1 are Cas6b (SSO1437) and Csa5 (SSO1443), while SSO1399, Cas5b (SSO1400) and SSO1401 have sometimes been seen weakly associated. Csa2 is probably the major RNA-binding subunit. The Csa2-Cas5a-crRNA complex also binds target DNA homologous to crRNA, probably forming an R-loop. Purified aCascade forms a filament about 6 nm in width.

CRISPR (clustered regularly interspaced short palindromic repeat) is an adaptive immune system that provides protection against mobile genetic elements (viruses, transposable elements and conjugative plasmids). CRISPR clusters contain spacers, sequences complementary to antecedent mobile elements, and target invading nucleic acids. CRISPR clusters are transcribed and processed into CRISPR RNA (crRNA). The sequence is that of CRISPR-associated aCascade subunit Cas7/Csa2 2 (csa2b) from Saccharolobus solfataricus (strain ATCC 35092 / DSM 1617 / JCM 11322 / P2) (Sulfolobus solfataricus).